The following is a 257-amino-acid chain: Indole-3-glycerol phosphate synthase (257 aa).

The protein belongs to the TrpC family.

The enzyme catalyses 1-(2-carboxyphenylamino)-1-deoxy-D-ribulose 5-phosphate + H(+) = (1S,2R)-1-C-(indol-3-yl)glycerol 3-phosphate + CO2 + H2O. The protein operates within amino-acid biosynthesis; L-tryptophan biosynthesis; L-tryptophan from chorismate: step 4/5. This is Indole-3-glycerol phosphate synthase from Chlorobium chlorochromatii (strain CaD3).